The chain runs to 122 residues: Small ribosomal subunit protein uS13 (122 aa).

The segment at arginine 99–lysine 122 is disordered.

This sequence belongs to the universal ribosomal protein uS13 family. In terms of assembly, part of the 30S ribosomal subunit. Forms a loose heterodimer with protein S19. Forms two bridges to the 50S subunit in the 70S ribosome.

Located at the top of the head of the 30S subunit, it contacts several helices of the 16S rRNA. In the 70S ribosome it contacts the 23S rRNA (bridge B1a) and protein L5 of the 50S subunit (bridge B1b), connecting the 2 subunits; these bridges are implicated in subunit movement. Contacts the tRNAs in the A and P-sites. This is Small ribosomal subunit protein uS13 from Cereibacter sphaeroides (strain ATCC 17025 / ATH 2.4.3) (Rhodobacter sphaeroides).